The primary structure comprises 1652 residues: Maestro heat-like repeat-containing protein family member 1 (1652 aa).

HEAT repeat units follow at residues 3-41, 260-300, 344-382, 385-423, 1369-1407, 1410-1448, and 1616-1652; these read ETYA…SKPA, EEQL…VGSR, CCSP…AAAA, EVKK…HGYL, LMLL…GSPD, QTHS…LMDL, and QVDL…VKFA.

It belongs to the MROH1 family. As to quaternary structure, homooligomer; homooligomerizes at lysosome scission sites.

Its subcellular location is the lysosome membrane. In terms of biological role, lysosome fission factor. Recruited to lysosomes by RAB7 (RAB7A or RAB7B) at scission sites and homooligomerizes to mediate the constriction and scission of lysosomal tubules. May sever membranes by inserting amphipathic helices into one bilayer leaflet. Lysosome fission is required to maintain their steady-state number, shape, size, composition and function, and to accomplish regeneration. The sequence is that of Maestro heat-like repeat-containing protein family member 1 (MROH1) from Bos taurus (Bovine).